A 920-amino-acid chain; its full sequence is MKEYKDTLNLNTTTFSMKGNLSVNEPKTYAKWQEQQAFKRMQNRKDNHGDFTLHDGPPYANGHLHLGHALNKILKDIVIKREYFKGNKIYYTPGWDCHGLPIEQQILERLEKEKTSLENPTLFREKCRDHAKKFLEIQKNEFLQLGVLGDFEDPYKTMDFKFEASIYRALVEVAKKGLLKERHKPIYWSYACESALAEAEVEYKMKKSPSIFVAFGLKKESLEKLKVKKASLVIWTTTPWTLYANVAIALKKDALYALTQKGYLVAKVLHEKLAALGVVDSEIAHEFNANDLEYLKATNPLNQRDSLITLGEHVGLEDGTGAVHTAPGHGEEDYYLGLKYNLEVLMSVDEKGCYNEGIIHKKLLDESYLGEHVFKAQKRIIEQLGDSLLLEQEIEHSYPHCWRTHKPVIYRATTQWFILMDEPFIQNDGSQKTLREVALNAIEKVEFVPSSGKNRLKTMIENRPDWCLSRQRKWGVPLAFFIDKRTNKPCFESEVLEHVANLFEKKGCDVWWESSVKDLLPPSYQEDSKHYEKVMHILDVWFDSGSTFKAVLEDYYGEKGQSPSDVILEGSDQHRGWFQSSLLIGCVLNNQAPFKKVITHGFIVDEKGEKMSKSKGNVVSLDNLLKKHGSDVVRLWVAFNDYQNDLRVSQTFFIQTEQHYKKFRNTLKFLLANFSDMDLKDLERSHNFSPLDHFILETLETTSTGVNSAFEEHDFVKGLNILMAFVTNELSGIYLDACKDSLYCDSKNNKKRQAIQMVLLAVASQLCYFLAPILTHTIEEVLEHSQVLCAFLQAKDVFDLKGINILEKLRLKEFKKPENFEAVLALRSAFNEELDRLKKEGVIKNSLECAIEVKEKALRENLVEELLMVSFVGVAKEKISETPAFTLFKAPFYKCPRCWRFKSELENTPCKRCEEVLKER.

The 'HIGH' region signature appears at 58–68; it reads PYANGHLHLGH. Glu569 is an L-isoleucyl-5'-AMP binding site. A 'KMSKS' region motif is present at residues 610 to 614; it reads KMSKS. Lys613 is an ATP binding site. Zn(2+) contacts are provided by Cys895, Cys898, Cys910, and Cys913.

It belongs to the class-I aminoacyl-tRNA synthetase family. IleS type 1 subfamily. Monomer. It depends on Zn(2+) as a cofactor.

Its subcellular location is the cytoplasm. The enzyme catalyses tRNA(Ile) + L-isoleucine + ATP = L-isoleucyl-tRNA(Ile) + AMP + diphosphate. Catalyzes the attachment of isoleucine to tRNA(Ile). As IleRS can inadvertently accommodate and process structurally similar amino acids such as valine, to avoid such errors it has two additional distinct tRNA(Ile)-dependent editing activities. One activity is designated as 'pretransfer' editing and involves the hydrolysis of activated Val-AMP. The other activity is designated 'posttransfer' editing and involves deacylation of mischarged Val-tRNA(Ile). This chain is Isoleucine--tRNA ligase, found in Helicobacter pylori (strain G27).